A 424-amino-acid polypeptide reads, in one-letter code: Arogenate dehydratase 1 (424 aa).

Residues 1–52 (MQSLTPSSGVNLKSIIRKTSLPPGQTRFITGRVIKCGYQVDSANTVNTAGAP) constitute a chloroplast transit peptide. The Prephenate dehydratase domain occupies 131-308 (RVAYQGVPGA…NVTRFVMLAR (178 aa)). The 92-residue stretch at 321-412 (TSIVFAHEGT…SFLRVLGSYP (92 aa)) folds into the ACT domain.

Mostly expressed in flowers, especially in petals (corollas and tubes), and, at low levels, in roots, stems, leaves, pistils, stamens, ovaries and sepals.

It localises to the plastid. It is found in the chloroplast stroma. It carries out the reaction L-arogenate + H(+) = L-phenylalanine + CO2 + H2O. Its pathway is amino-acid biosynthesis; L-phenylalanine biosynthesis; L-phenylalanine from L-arogenate: step 1/1. Converts L-arogenate produced from the shikimate-chorismate pathway into phenylalanine (Phe). Involved in floral volatile benzenoids and phenylpropanoids (FVBP) production. The chain is Arogenate dehydratase 1 from Petunia hybrida (Petunia).